The sequence spans 449 residues: Baeyer-Villiger oxidase GME11358 (449 aa).

This sequence belongs to the questin oxidase family.

Its pathway is secondary metabolite biosynthesis. Functionally, baeyer-Villiger oxidase; part of the gene cluster that mediates the biosynthesis of dibenzodioxocinones such as pestalotiollide B, a novel class of inhibitors against cholesterol ester transfer protein (CEPT). The biosynthesis initiates from condensation of acetate and malonate units catalyzed by the non-reducing PKS pks8/GME11356. Pks8/GME11356 lacks a thioesterase (TE) domain, which is important to the cyclizing of the third ring of atrochrysone carboxylic acid, and the esterase GME11355 might play the role of TE and catalyzes the cyclization reaction of the C ring. The lactamase-like protein GME11357 (or other beta-lactamases in Pestalotiopsis microspora) probably hydrolyzes the thioester bond between the ACP of pks8/GME11356 and the intermediate to release atrochrysone carboxylic acid, which is spontaneously dehydrates to form endocrocin anthrone. Endocrocin anthrone is further converted to emodin via the endocrocin intermediate. Emodin is then oxidized by several enzymes such as the Baeyer-Villiger oxidase GME11358, the oxidoreductase GME11367, the short chain dehydrogenase/reductase GME11373, as well as by other oxidoreductases from the cluster, to modify the A and C rings and open the B ring, and finally yield monodictyphenone. The prenyltransferase GME11375 may catalyze the addition reaction between the C5 side chains and the carbon bone of dibenzodioxocinones. The remaining biochemical reactions to the final product dibenzodioxocinones should be methylation catalyzed by methyltransferase GME11366 and reduction and lactonization reaction catalyzed by a series of oxidordeuctases. This is Baeyer-Villiger oxidase GME11358 from Pestalotiopsis microspora.